We begin with the raw amino-acid sequence, 416 residues long: RNA polymerase sigma-C factor (416 aa).

A Polymerase core binding motif is present at residues 205–218 (DLVQEGTLGLERAV). Residues 374 to 393 (LAEIGRALDLSRERVRQIES) constitute a DNA-binding region (H-T-H motif).

Belongs to the sigma-70 factor family.

In terms of biological role, sigma factors are initiation factors that promote the attachment of RNA polymerase to specific initiation sites and are then released. This is RNA polymerase sigma-C factor (sigC) from Nostoc sp. (strain PCC 7120 / SAG 25.82 / UTEX 2576).